An 842-amino-acid polypeptide reads, in one-letter code: Protein P (842 aa).

The interval methionine 1–glutamine 177 is terminal protein domain (TP). The interval glutamate 178–leucine 345 is spacer. The tract at residues aspartate 186–serine 273 is disordered. The segment covering glycine 223–serine 239 has biased composition (polar residues). The tract at residues glutamate 346–glutamine 689 is polymerase/reverse transcriptase domain (RT). Positions arginine 356–isoleucine 599 constitute a Reverse transcriptase domain. Mg(2+)-binding residues include aspartate 428, aspartate 550, and aspartate 551.

This sequence belongs to the hepadnaviridae P protein family.

The enzyme catalyses DNA(n) + a 2'-deoxyribonucleoside 5'-triphosphate = DNA(n+1) + diphosphate. It carries out the reaction Endonucleolytic cleavage to 5'-phosphomonoester.. Activated by host HSP70 and HSP40 in vitro to be able to bind the epsilon loop of the pgRNA. Because deletion of the RNase H region renders the protein partly chaperone-independent, the chaperones may be needed indirectly to relieve occlusion of the RNA-binding site by this domain. Inhibited by several reverse-transcriptase inhibitors: Lamivudine, Adefovir and Entecavir. In terms of biological role, multifunctional enzyme that converts the viral RNA genome into dsDNA in viral cytoplasmic capsids. This enzyme displays a DNA polymerase activity that can copy either DNA or RNA templates, and a ribonuclease H (RNase H) activity that cleaves the RNA strand of RNA-DNA heteroduplexes in a partially processive 3'- to 5'-endonucleasic mode. Neo-synthesized pregenomic RNA (pgRNA) are encapsidated together with the P protein, and reverse-transcribed inside the nucleocapsid. Initiation of reverse-transcription occurs first by binding the epsilon loop on the pgRNA genome, and is initiated by protein priming, thereby the 5'-end of (-)DNA is covalently linked to P protein. Partial (+)DNA is synthesized from the (-)DNA template and generates the relaxed circular DNA (RC-DNA) genome. After budding and infection, the RC-DNA migrates in the nucleus, and is converted into a plasmid-like covalently closed circular DNA (cccDNA). The activity of P protein does not seem to be necessary for cccDNA generation, and is presumably released from (+)DNA by host nuclear DNA repair machinery. The chain is Protein P from Homo sapiens (Human).